A 313-amino-acid polypeptide reads, in one-letter code: Leucine-rich repeat-containing protein 52 (313 aa).

A signal peptide spans 1–23; sequence MSLASGPGPGWLLFSFGMGLVSG. Residues 24–53 form the LRRNT domain; the sequence is SKCPNNCLCQAQEVICTGKQLTEYPLDIPL. At 24-244 the chain is on the extracellular side; the sequence is SKCPNNCLCQ…MCITHLDHKD (221 aa). 2 disulfide bridges follow: cysteine 26-cysteine 32 and cysteine 30-cysteine 39. LRR repeat units follow at residues 54–75, 78–99, 102–123, 126–148, and 151–172; these read NTRRLFLNENRITSLPAMHLGL, DLVYLDCQNNRIREVMDYTFIG, KLIYLDLSSNNLTSISPFTFSV, NLVQLNIANNPHLLSLHKFTFAN, and SLRYLDLRNTGLQTLDSAALYH. Residues asparagine 112 and asparagine 148 are each glycosylated (N-linked (GlcNAc...) asparagine). The 55-residue stretch at 184-238 folds into the LRRCT domain; the sequence is NPWKCNCSFLDFAIFLIVFHMDPSDDLNATCVEPTELTGWPITRVGNPLRYMCIT. Intrachain disulfides connect cysteine 188-cysteine 214 and cysteine 190-cysteine 236. Residues asparagine 189 and asparagine 211 are each glycosylated (N-linked (GlcNAc...) asparagine). Residues 245-265 form a helical membrane-spanning segment; sequence YIFLLLIGFCIFAAGTVAAWL. The Cytoplasmic segment spans residues 266–313; that stretch reads TGVCAVLYQNTRHKSSEEDEDEAGTRVEVSRRIFQTQTSSVQEFPQLI.

May interact with KCNU1; this interaction may be required for LRRC52 stability and may change the channel gating properties. Interacts with KCNMA1. In terms of processing, N-glycosylated. As to expression, mainly expressed in testis and skeletal muscle.

Its subcellular location is the cell membrane. Its function is as follows. Auxiliary protein of the large-conductance, voltage and calcium-activated potassium channel (BK alpha). Modulates gating properties by producing a marked shift in the BK channel's voltage dependence of activation in the hyperpolarizing direction, and in the absence of calcium. KCNU1 channel auxiliary protein. Modulates KCNU1 gating properties. The sequence is that of Leucine-rich repeat-containing protein 52 (LRRC52) from Homo sapiens (Human).